The following is a 256-amino-acid chain: DNA repair protein RecO (256 aa).

It belongs to the RecO family.

Functionally, involved in DNA repair and RecF pathway recombination. The sequence is that of DNA repair protein RecO from Thiobacillus denitrificans (strain ATCC 25259 / T1).